We begin with the raw amino-acid sequence, 706 residues long: MQLLCVFCLVLLWEVGAASLSEVKLHLDIEGHASHYTIPWTELMAKVPGLSPEALWREANVTEDLASMLNRYKLIYKTSGTLGIALAEPVDIPAVSEGSMQVDASKVHPGVISGLNSPACMLSAPLEKQLFYYIGTMLPNTRPHSYVFYQLRCHLSYVALSINGDKFQYTGAMTSKFLMGTYKRVTEKGDEHVLSLVFGKTKDLPDLRGPFSYPSLTSAQSGDYSLVIVTTFVHYANFHNYFVPNLKDMFSRAVTMTAASYARYVLQKLVLLEMKGGCREPELDTETLTTMFEVSVAFFKVGHAVGETGNGCVDLRWLAKSFFELTVLKDIIGICYGATVKGMQSYGLERLAAMLMATVKMEELGHLTTEKQEYALRLATVGYPKAGVYSGLIGGATSVLLSAYNRHPLFQPLHTVMRETLFIGSHVVLRELRLNVTTQGPNLALYQLLSTALCSALEIGEVLRGLALGTESGLFSPCYLSLRFDLTRDKLLSMAPQEATLDQAAVSNAVDGFLGRLSLEREDRDAWHLPAYKCVDRLDKVLMIIPLINVTFIISSDREVRGSALYEASTTYLSSSLFLSPVIMNKCSQGAVAGEPRQIPKIQNFTRTQKSCIFCGFALLSYDEKEGLETTTYITSQEVQNSILSSNYFDFDNLHVHYLLLTTNGTVMEIAGLYEERAHVVLAIILYFIAFALGIFLVHKIVMFFL.

The N-terminal stretch at 1–18 (MQLLCVFCLVLLWEVGAA) is a signal peptide. Residues 19–682 (SLSEVKLHLD…LYEERAHVVL (664 aa)) lie on the Virion surface side of the membrane. The N-linked (GlcNAc...) asparagine; by host glycan is linked to asparagine 60. Intrachain disulfides connect cysteine 120-cysteine 312 and cysteine 278-cysteine 335. Residues 165–229 (DKFQYTGAMT…QSGDYSLVIV (65 aa)) form an interaction with gL region. Asparagine 435 carries N-linked (GlcNAc...) asparagine; by host glycosylation. Cystine bridges form between cysteine 454–cysteine 478 and cysteine 534–cysteine 587. N-linked (GlcNAc...) asparagine; by host glycans are attached at residues asparagine 549 and asparagine 604. Residues cysteine 612 and cysteine 615 are joined by a disulfide bond. N-linked (GlcNAc...) asparagine; by host glycosylation occurs at asparagine 664. The chain crosses the membrane as a helical span at residues 683 to 703 (AIILYFIAFALGIFLVHKIVM). Topologically, residues 704–706 (FFL) are intravirion.

The protein belongs to the herpesviridae glycoprotein H family. As to quaternary structure, interacts with glycoprotein L (gL); this interaction is necessary for the correct processing and cell surface expression of gH. The heterodimer gH/gL seems to interact with gB trimers during fusion. The heterodimer gH/gL interacts with host EPHA2 to facilitate virus internalization and fusion. Interacts with glycoprotein 42/BZLF2. N-glycosylated, O-glycosylated, and sialylated.

Its subcellular location is the virion membrane. It localises to the host cell membrane. The protein resides in the host endosome membrane. Functionally, the heterodimer glycoprotein H-glycoprotein L is required for the fusion of viral and plasma membranes leading to virus entry into the host cell. Following initial binding to host receptor, membrane fusion is mediated by the fusion machinery composed of gB and the heterodimer gH/gL. May also be involved in the fusion between the virion envelope and the outer nuclear membrane during virion morphogenesis. The heterodimer gH/gL targets also host EPHA2 to promote viral entry. The chain is Envelope glycoprotein H from Homo sapiens (Human).